A 519-amino-acid polypeptide reads, in one-letter code: Chaperone SurA (519 aa).

Residues 1 to 31 form the signal peptide; the sequence is MMRSLHSLRRMSGTVLALMLAAGLPLSAAQA. Composition is skewed to low complexity over residues 31–45 and 197–207; these read AQPA…QKPA and PAAAQATRAPA. Disordered stretches follow at residues 31–50 and 196–221; these read AQPA…PAPS and NPAA…PAQS. The PpiC 1 domain occupies 223 to 324; the sequence is PAMLVLAQIL…NGFHILKVVD (102 aa). Residues 328–361 form a disordered region; that stretch reads GGQPAQAARPAPAPAPQQPSSFQEGPSVAAPQGP. Positions 364-463 constitute a PpiC 2 domain; that stretch reads VTQTHARHIL…FGWHLIQVLE (100 aa).

It is found in the periplasm. The enzyme catalyses [protein]-peptidylproline (omega=180) = [protein]-peptidylproline (omega=0). Its function is as follows. Chaperone involved in the correct folding and assembly of outer membrane proteins. Recognizes specific patterns of aromatic residues and the orientation of their side chains, which are found more frequently in integral outer membrane proteins. May act in both early periplasmic and late outer membrane-associated steps of protein maturation. The chain is Chaperone SurA from Bordetella pertussis (strain Tohama I / ATCC BAA-589 / NCTC 13251).